The primary structure comprises 191 residues: Signal peptidase IB (191 aa).

Topologically, residues 1–7 (MKKEILE) are cytoplasmic. Residues 8 to 28 (WIISIAVAFVILFIVGKFIVT) traverse the membrane as a helical segment. Residues 29-191 (PYTIKGESMD…HNFNPENTKN (163 aa)) lie on the Extracellular side of the membrane. Residues serine 36 and lysine 77 contribute to the active site.

The protein belongs to the peptidase S26 family.

Its subcellular location is the cell membrane. The catalysed reaction is Cleavage of hydrophobic, N-terminal signal or leader sequences from secreted and periplasmic proteins.. Functionally, essential for cell viability. In Staphylococcus aureus (strain COL), this protein is Signal peptidase IB (spsB).